The following is a 429-amino-acid chain: Adenylosuccinate synthetase (429 aa).

GTP-binding positions include 12–18 (GDEGKGK) and 40–42 (GHT). The active-site Proton acceptor is aspartate 13. The Mg(2+) site is built by aspartate 13 and glycine 40. Residues 13–16 (DEGK), 38–41 (NAGH), threonine 127, arginine 141, glutamine 222, threonine 237, and arginine 301 contribute to the IMP site. Histidine 41 serves as the catalytic Proton donor. 297-303 (ATTGRPR) contacts substrate. GTP-binding positions include arginine 303, 329-331 (KLD), and 411-413 (SLG).

This sequence belongs to the adenylosuccinate synthetase family. Homodimer. Requires Mg(2+) as cofactor.

Its subcellular location is the cytoplasm. It catalyses the reaction IMP + L-aspartate + GTP = N(6)-(1,2-dicarboxyethyl)-AMP + GDP + phosphate + 2 H(+). It participates in purine metabolism; AMP biosynthesis via de novo pathway; AMP from IMP: step 1/2. Functionally, plays an important role in the de novo pathway of purine nucleotide biosynthesis. Catalyzes the first committed step in the biosynthesis of AMP from IMP. This chain is Adenylosuccinate synthetase, found in Endomicrobium trichonymphae.